A 118-amino-acid chain; its full sequence is Ribonuclease P protein component (118 aa).

The protein belongs to the RnpA family. In terms of assembly, consists of a catalytic RNA component (M1 or rnpB) and a protein subunit.

The enzyme catalyses Endonucleolytic cleavage of RNA, removing 5'-extranucleotides from tRNA precursor.. Functionally, RNaseP catalyzes the removal of the 5'-leader sequence from pre-tRNA to produce the mature 5'-terminus. It can also cleave other RNA substrates such as 4.5S RNA. The protein component plays an auxiliary but essential role in vivo by binding to the 5'-leader sequence and broadening the substrate specificity of the ribozyme. In Ureaplasma urealyticum serovar 10 (strain ATCC 33699 / Western), this protein is Ribonuclease P protein component.